The primary structure comprises 733 residues: FYVE, RhoGEF and PH domain-containing protein 3 (733 aa).

Composition is skewed to polar residues over residues 1 to 11 (MELGRSSSTPQ), 47 to 60 (HSSS…STRE), and 106 to 117 (ETASDSRVPQDN). The interval 1-134 (MELGRSSSTP…GVGEEPDPKV (134 aa)) is disordered. The segment covering 118–129 (PQEEEDSGVGEE) has biased composition (acidic residues). The residue at position 124 (S124) is a Phosphoserine. The 185-residue stretch at 153 to 337 (KLLHIAQELL…STAADHSNAA (185 aa)) folds into the DH domain. Residues 366 to 465 (ELIKEGSIQK…WIQVIQATVE (100 aa)) enclose the PH 1 domain. The disordered stretch occupies residues 481 to 535 (CSQDEEPTLSPDQPVMSTSSVEPAGVADSNGGTPGIESRKSSSKTRRDKEKPGCK). Residues 517 to 533 (ESRKSSSKTRRDKEKPG) show a composition bias toward basic and acidic residues. The FYVE-type zinc finger occupies 528-584 (DKEKPGCKSCGETFNSITKRRYRCKLCGEVICRKCSEFKAENSKQSRVCRECFLEEP). Zn(2+) is bound by residues C534, C537, C551, C554, C559, C562, C576, and C579. Disordered regions lie at residues 586–612 (VPPS…DPRP) and 712–733 (GDTA…TDTP). One can recognise a PH 2 domain in the interval 612-711 (PSLLCGTLNL…WLKALGTAVH (100 aa)). A Phosphothreonine modification is found at T732.

Detected in adult brain, spleen, lung and skeletal muscle. Detected in embryos from 7 dpc to 17 dpc.

The protein resides in the cytoplasm. The protein localises to the cytoskeleton. Functionally, promotes the formation of filopodia. May activate CDC42, a member of the Ras-like family of Rho- and Rac proteins, by exchanging bound GDP for free GTP. Plays a role in regulating the actin cytoskeleton and cell shape. This is FYVE, RhoGEF and PH domain-containing protein 3 (Fgd3) from Mus musculus (Mouse).